A 367-amino-acid polypeptide reads, in one-letter code: RNA-binding protein 48 (367 aa).

The 79-residue stretch at 46–124 folds into the RRM domain; that stretch reads QYLLIQGVPA…GLLHVCYAPE (79 aa). A compositionally biased stretch (basic and acidic residues) spans 217–228; that stretch reads PVDRASDSSKDG. Disordered stretches follow at residues 217-243, 277-303, and 339-367; these read PVDRASDSSKDGRNHHKTMGHYNHNGS, RTTQLQERKRRREDDRKLGTFLQTNPS, and EVISSVPKPPEDKPEDVNTSHPLKQRRRI. Residues 347–356 are compositionally biased toward basic and acidic residues; sequence PPEDKPEDVN.

This sequence belongs to the RBM48 family. As to quaternary structure, component of the minor spliceosome. Within this complex, interacts with ARMC7 and PRPF8/PRP8.

As a component of the minor spliceosome, involved in the splicing of U12-type introns in pre-mRNAs. This Pongo abelii (Sumatran orangutan) protein is RNA-binding protein 48 (RBM48).